We begin with the raw amino-acid sequence, 275 residues long: Large ribosomal subunit protein uL2 (275 aa).

Residues 28 to 38 (EPYAPLLDKKS) are compositionally biased toward basic and acidic residues. 2 disordered regions span residues 28–55 (EPYA…RHVG) and 224–258 (AMNP…GYKT).

The protein belongs to the universal ribosomal protein uL2 family. As to quaternary structure, part of the 50S ribosomal subunit. Forms a bridge to the 30S subunit in the 70S ribosome.

In terms of biological role, one of the primary rRNA binding proteins. Required for association of the 30S and 50S subunits to form the 70S ribosome, for tRNA binding and peptide bond formation. It has been suggested to have peptidyltransferase activity; this is somewhat controversial. Makes several contacts with the 16S rRNA in the 70S ribosome. This is Large ribosomal subunit protein uL2 from Cellvibrio japonicus (strain Ueda107) (Pseudomonas fluorescens subsp. cellulosa).